Here is a 409-residue protein sequence, read N- to C-terminus: Secreted LysM effector Blys2 (409 aa).

A signal peptide spans 1-20 (MTRFTTTLVAALAGANLAAA). Residues 24-71 (YKWRAHAGDTCDSLSSDWSVQVSDFIKWNPSVGANCSNGVTAGQEYCV) form the LysM 1 domain. Residue asparagine 58 is glycosylated (N-linked (GlcNAc...) asparagine). A disordered region spans residues 74 to 111 (NGAGSKPTTPPTGSPTTLTTAVTTASSTPTQPTDGAPS). Residues 87–106 (SPTTLTTAVTTASSTPTQPT) are compositionally biased toward low complexity. LysM domains follow at residues 129-176 (AWYK…YVCV), 206-253 (KWYK…FVCV), 283-330 (KFYK…YYCI), and 357-405 (KYYK…YICV).

It belongs to the secreted LysM effector family.

It is found in the secreted. The protein localises to the cell wall. Secreted effector that enables the plant pathogenic fungus to manipulate host defenses for successful infection. Required for the full virulence to infect insect hosts. In contrast to Blys5, Blys2 is not able to protect fungal hyphae against the hydrolytic activity of chitinase but plays an important role in evasion of insect immunities. Binds chitin. Coats and protects the cell walls of insect pathogens from host cell recognition. The sequence is that of Secreted LysM effector Blys2 from Beauveria bassiana (strain ARSEF 2860) (White muscardine disease fungus).